The sequence spans 309 residues: tRNA dimethylallyltransferase (309 aa).

9 to 16 (GPTAVGKT) serves as a coordination point for ATP. Position 11–16 (11–16 (TAVGKT)) interacts with substrate. Positions 34 to 37 (DSMQ) are interaction with substrate tRNA.

Belongs to the IPP transferase family. As to quaternary structure, monomer. Mg(2+) is required as a cofactor.

The enzyme catalyses adenosine(37) in tRNA + dimethylallyl diphosphate = N(6)-dimethylallyladenosine(37) in tRNA + diphosphate. Its function is as follows. Catalyzes the transfer of a dimethylallyl group onto the adenine at position 37 in tRNAs that read codons beginning with uridine, leading to the formation of N6-(dimethylallyl)adenosine (i(6)A). The protein is tRNA dimethylallyltransferase of Clostridium acetobutylicum (strain ATCC 824 / DSM 792 / JCM 1419 / IAM 19013 / LMG 5710 / NBRC 13948 / NRRL B-527 / VKM B-1787 / 2291 / W).